The chain runs to 219 residues: Putative GEM-like protein 8 (219 aa).

The GRAM domain occupies 96–174 (KIYKRLFKVS…CKINGVNQSQ (79 aa)).

The protein belongs to the GEM family.

This is Putative GEM-like protein 8 from Arabidopsis thaliana (Mouse-ear cress).